A 473-amino-acid polypeptide reads, in one-letter code: Glutamyl-tRNA reductase (473 aa).

Substrate-binding positions include 49 to 52 (TCNR), Ser109, 114 to 116 (ESQ), and Gln120. Cys50 functions as the Nucleophile in the catalytic mechanism. The disordered stretch occupies residues 196–215 (LDGGGVAAEGPRHAVTPEPP). Residue 226–231 (GAGAVG) coordinates NADP(+).

It belongs to the glutamyl-tRNA reductase family. In terms of assembly, homodimer.

It catalyses the reaction (S)-4-amino-5-oxopentanoate + tRNA(Glu) + NADP(+) = L-glutamyl-tRNA(Glu) + NADPH + H(+). It functions in the pathway porphyrin-containing compound metabolism; protoporphyrin-IX biosynthesis; 5-aminolevulinate from L-glutamyl-tRNA(Glu): step 1/2. In terms of biological role, catalyzes the NADPH-dependent reduction of glutamyl-tRNA(Glu) to glutamate 1-semialdehyde (GSA). The polypeptide is Glutamyl-tRNA reductase (Frankia casuarinae (strain DSM 45818 / CECT 9043 / HFP020203 / CcI3)).